We begin with the raw amino-acid sequence, 563 residues long: Membrane protein insertase YidC (563 aa).

The helical transmembrane segment at 6–26 (TVLWMIFSFSLLLLWNNWQIH) threads the bilayer. The segment at 36-70 (PAPEAAATQQPKADANGTAASSTASIPSSPAAAPA) is disordered. Residues 54–70 (AASSTASIPSSPAAAPA) show a composition bias toward low complexity. Transmembrane regions (helical) follow at residues 373–393 (WGWT…PLAA), 443–463 (LPMV…LASV), 482–502 (PFFI…KLNP), and 512–532 (VMMI…AGLV).

This sequence belongs to the OXA1/ALB3/YidC family. Type 1 subfamily. In terms of assembly, interacts with the Sec translocase complex via SecD. Specifically interacts with transmembrane segments of nascent integral membrane proteins during membrane integration.

It localises to the cell membrane. In terms of biological role, required for the insertion and/or proper folding and/or complex formation of integral membrane proteins into the membrane. Involved in integration of membrane proteins that insert both dependently and independently of the Sec translocase complex, as well as at least some lipoproteins. Aids folding of multispanning membrane proteins. The polypeptide is Membrane protein insertase YidC (Bordetella bronchiseptica (strain ATCC BAA-588 / NCTC 13252 / RB50) (Alcaligenes bronchisepticus)).